Consider the following 628-residue polypeptide: tRNA uridine 5-carboxymethylaminomethyl modification enzyme MnmG (628 aa).

FAD is bound at residue 14–19 (GAGHAG). 274-288 (GPRYCPSIEDKIVRF) is an NAD(+) binding site.

The protein belongs to the MnmG family. In terms of assembly, homodimer. Heterotetramer of two MnmE and two MnmG subunits. Requires FAD as cofactor.

It localises to the cytoplasm. In terms of biological role, NAD-binding protein involved in the addition of a carboxymethylaminomethyl (cmnm) group at the wobble position (U34) of certain tRNAs, forming tRNA-cmnm(5)s(2)U34. This Clostridium kluyveri (strain ATCC 8527 / DSM 555 / NBRC 12016 / NCIMB 10680 / K1) protein is tRNA uridine 5-carboxymethylaminomethyl modification enzyme MnmG.